We begin with the raw amino-acid sequence, 318 residues long: Putative enoyl-CoA hydratase EchA13 (318 aa).

The tract at residues 90 to 110 (LGSADDIRERSPGPDQHPSYR) is disordered.

The protein belongs to the enoyl-CoA hydratase/isomerase family.

The sequence is that of Putative enoyl-CoA hydratase EchA13 (echA13) from Mycobacterium tuberculosis (strain ATCC 25618 / H37Rv).